Consider the following 377-residue polypeptide: Succinyl-diaminopimelate desuccinylase (377 aa).

Position 67 (His-67) interacts with Zn(2+). The active site involves Asp-69. Asp-100 is a Zn(2+) binding site. Residue Glu-134 is the Proton acceptor of the active site. Residues Glu-135, Glu-163, and His-349 each coordinate Zn(2+).

The protein belongs to the peptidase M20A family. DapE subfamily. As to quaternary structure, homodimer. It depends on Zn(2+) as a cofactor. Co(2+) is required as a cofactor.

The catalysed reaction is N-succinyl-(2S,6S)-2,6-diaminopimelate + H2O = (2S,6S)-2,6-diaminopimelate + succinate. It functions in the pathway amino-acid biosynthesis; L-lysine biosynthesis via DAP pathway; LL-2,6-diaminopimelate from (S)-tetrahydrodipicolinate (succinylase route): step 3/3. Its function is as follows. Catalyzes the hydrolysis of N-succinyl-L,L-diaminopimelic acid (SDAP), forming succinate and LL-2,6-diaminopimelate (DAP), an intermediate involved in the bacterial biosynthesis of lysine and meso-diaminopimelic acid, an essential component of bacterial cell walls. This is Succinyl-diaminopimelate desuccinylase from Mannheimia succiniciproducens (strain KCTC 0769BP / MBEL55E).